The primary structure comprises 343 residues: DNA repair and recombination protein RadA (343 aa).

Residue 107 to 114 (GEFGAGKS) coordinates ATP.

It belongs to the eukaryotic RecA-like protein family.

Involved in DNA repair and in homologous recombination. Binds and assemble on single-stranded DNA to form a nucleoprotein filament. Hydrolyzes ATP in a ssDNA-dependent manner and promotes DNA strand exchange between homologous DNA molecules. The sequence is that of DNA repair and recombination protein RadA from Halobacterium salinarum (strain ATCC 29341 / DSM 671 / R1).